Consider the following 197-residue polypeptide: Imidazoleglycerol-phosphate dehydratase (197 aa).

It belongs to the imidazoleglycerol-phosphate dehydratase family.

The protein localises to the cytoplasm. It carries out the reaction D-erythro-1-(imidazol-4-yl)glycerol 3-phosphate = 3-(imidazol-4-yl)-2-oxopropyl phosphate + H2O. The protein operates within amino-acid biosynthesis; L-histidine biosynthesis; L-histidine from 5-phospho-alpha-D-ribose 1-diphosphate: step 6/9. This is Imidazoleglycerol-phosphate dehydratase from Pseudomonas putida (strain GB-1).